Reading from the N-terminus, the 635-residue chain is Membrane protein insertase YidC (635 aa).

Residues 8–28 (LILAMVLSALVMLVWSIFFAP) form a helical membrane-spanning segment. Positions 33-61 (PAQDTPAASTQGTAQPEAGGPATPGAVPQ) are disordered. The next 4 membrane-spanning stretches (helical) occupy residues 396-416 (MIGN…LLVF), 470-490 (LPVL…FVTI), 528-548 (SFLH…SMWM), and 564-584 (IFAW…SGLV). Positions 615 to 635 (IRSSLPSRAKAGDKGGDKGGK) are disordered. The segment covering 624 to 635 (KAGDKGGDKGGK) has biased composition (basic and acidic residues).

The protein belongs to the OXA1/ALB3/YidC family. Type 1 subfamily. In terms of assembly, interacts with the Sec translocase complex via SecD. Specifically interacts with transmembrane segments of nascent integral membrane proteins during membrane integration.

It localises to the cell inner membrane. Functionally, required for the insertion and/or proper folding and/or complex formation of integral membrane proteins into the membrane. Involved in integration of membrane proteins that insert both dependently and independently of the Sec translocase complex, as well as at least some lipoproteins. Aids folding of multispanning membrane proteins. This is Membrane protein insertase YidC from Paracoccus denitrificans (strain Pd 1222).